We begin with the raw amino-acid sequence, 533 residues long: Probable galacturonosyltransferase 13 (533 aa).

The Cytoplasmic portion of the chain corresponds to 1–40 (MQLHISPSMRSITISSSNEFIDLMKIKVAARHISYRTLFH). A helical; Signal-anchor for type II membrane protein transmembrane segment spans residues 41–61 (TILILAFLLPFVFILTAVVTL). Topologically, residues 62 to 533 (EGVNKCSSFD…DFIKNCHILE (472 aa)) are lumenal. Residues N306, N396, N445, and N520 are each glycosylated (N-linked (GlcNAc...) asparagine).

The protein belongs to the glycosyltransferase 8 family. As to expression, expressed in roots, inflorescences, siliques, leaves and stems. Accumulates in pollen grains.

The protein localises to the golgi apparatus membrane. The protein operates within glycan metabolism; pectin biosynthesis. In terms of biological role, may be involved in pectin and/or xylans biosynthesis in cell walls. Together with GAUT14, required for pollen tube growth, possibly through the regulation of pectin biosynthesis and repartition in the pollen tube wall. This Arabidopsis thaliana (Mouse-ear cress) protein is Probable galacturonosyltransferase 13.